A 302-amino-acid chain; its full sequence is L-aminoadipate-semialdehyde dehydrogenase-phosphopantetheinyl transferase (302 aa).

Residues arginine 44, 83 to 88, and 105 to 108 contribute to the CoA site; these read RTGKGK and NVSH. 2 residues coordinate Mg(2+): aspartate 126 and glutamate 178. 178-182 lines the CoA pocket; the sequence is ESFIK.

The protein belongs to the P-Pant transferase superfamily. AcpS family. Monomer. Mg(2+) serves as cofactor.

Its subcellular location is the cytoplasm. It localises to the cytosol. The enzyme catalyses apo-[ACP] + CoA = holo-[ACP] + adenosine 3',5'-bisphosphate + H(+). The catalysed reaction is apo-[ACP] + acetyl-CoA = acetyl-[ACP] + adenosine 3',5'-bisphosphate + H(+). In terms of biological role, catalyzes the post-translational modification of target proteins by phosphopantetheine. Can transfer the 4'-phosphopantetheine moiety from coenzyme A, regardless of whether the CoA is presented in the free thiol form or as an acetyl thioester, to a serine residue of a broad range of acceptors. The polypeptide is L-aminoadipate-semialdehyde dehydrogenase-phosphopantetheinyl transferase (aasdhppt) (Xenopus laevis (African clawed frog)).